We begin with the raw amino-acid sequence, 362 residues long: Zinc transporter 9 (362 aa).

The signal sequence occupies residues 1-21 (MAFDLKLTACLLLAVFSLAAA). The Extracellular segment spans residues 22–42 (ADCECQPSDEGHDAAKSRTLK). The chain crosses the membrane as a helical span at residues 43–63 (VIAIFCILVGSSAGCAIPSLG). Residues 64-74 (RRFPALRPDTS) lie on the Cytoplasmic side of the membrane. Residues 75–95 (LFFALKAFAAGVILATAFVHI) form a helical membrane-spanning segment. Topologically, residues 96-120 (LPVSFDKLGSPCLVDGPWRKYPFTG) are extracellular. Residues 121–141 (LVAMLAAVATLLLDTIATGYF) form a helical membrane-spanning segment. The Cytoplasmic portion of the chain corresponds to 142-207 (LQRAQDSRGA…EDRAKLVRHR (66 aa)). The chain crosses the membrane as a helical span at residues 208–228 (VISQVFELGIIVHSIIIGISL). Residues 229 to 239 (GASESPSTIRP) lie on the Extracellular side of the membrane. A helical transmembrane segment spans residues 240–260 (LVAALTFHQFFEGIGLGGCIV). The Cytoplasmic segment spans residues 261–269 (QARFHLKSA). Residues 270–290 (VTMAIFFSLTTPVGIMIGIGI) form a helical membrane-spanning segment. Residues 291–301 (SSAYNENSPTA) lie on the Extracellular side of the membrane. A helical transmembrane segment spans residues 302 to 322 (LIVEGILDAAAAGILNYMALV). Topologically, residues 323–341 (DLLAEDFMNPRVRKSGRLQ) are cytoplasmic. A helical membrane pass occupies residues 342-362 (LIISILLLVGIALMSLLGIWA).

The protein belongs to the ZIP transporter (TC 2.A.5) family.

The protein localises to the cell membrane. Zinc transporter that may be involved in zinc uptake from the rhizosphere. The chain is Zinc transporter 9 (ZIP9) from Oryza sativa subsp. japonica (Rice).